Consider the following 416-residue polypeptide: Serine hydroxymethyltransferase (416 aa).

(6S)-5,6,7,8-tetrahydrofolate-binding positions include L121 and 125-127; that span reads GHL. K229 carries the N6-(pyridoxal phosphate)lysine modification. (6S)-5,6,7,8-tetrahydrofolate is bound by residues E245 and 354-356; that span reads SPF.

It belongs to the SHMT family. Homodimer. The cofactor is pyridoxal 5'-phosphate.

The protein localises to the cytoplasm. The catalysed reaction is (6R)-5,10-methylene-5,6,7,8-tetrahydrofolate + glycine + H2O = (6S)-5,6,7,8-tetrahydrofolate + L-serine. Its pathway is one-carbon metabolism; tetrahydrofolate interconversion. It participates in amino-acid biosynthesis; glycine biosynthesis; glycine from L-serine: step 1/1. Functionally, catalyzes the reversible interconversion of serine and glycine with tetrahydrofolate (THF) serving as the one-carbon carrier. This reaction serves as the major source of one-carbon groups required for the biosynthesis of purines, thymidylate, methionine, and other important biomolecules. Also exhibits THF-independent aldolase activity toward beta-hydroxyamino acids, producing glycine and aldehydes, via a retro-aldol mechanism. In Aliivibrio fischeri (strain ATCC 700601 / ES114) (Vibrio fischeri), this protein is Serine hydroxymethyltransferase.